The primary structure comprises 63 residues: Disintegrin schistatin-like subunit B (63 aa).

One can recognise a Disintegrin domain in the interval 1 to 63; it reads NSVNPCCDPQ…TPDCPRNRYN (63 aa). Disulfide bonds link C6–C29, C20–C26, C25–C50, and C38–C57. The short motif at 42-44 is the Cell attachment site element; that stretch reads RGD.

Belongs to the disintegrin family. Dimeric disintegrin subfamily. In terms of assembly, heterodimer with subunit A; disulfide-linked. As to expression, expressed by the venom gland.

The protein localises to the secreted. May bind to both alpha-IIb/beta-3 (ITGA2B/ITGB3) and alpha-V/beta-3 (ITGAV/ITGB3) integrins, and may inhibit platelet aggregation. This is Disintegrin schistatin-like subunit B from Echis carinatus (Saw-scaled viper).